The sequence spans 193 residues: uncharacterized protein (193 aa).

This is an uncharacterized protein from Methanocaldococcus jannaschii (strain ATCC 43067 / DSM 2661 / JAL-1 / JCM 10045 / NBRC 100440) (Methanococcus jannaschii).